Here is a 343-residue protein sequence, read N- to C-terminus: 4-hydroxy-2-oxovalerate aldolase 1 (343 aa).

Residues 8-260 (VTVHDMTLRD…ETGVDVAKIT (253 aa)) enclose the Pyruvate carboxyltransferase domain. Residue 16 to 17 (RD) participates in substrate binding. Asp17 provides a ligand contact to Mn(2+). His20 serves as the catalytic Proton acceptor. Positions 170 and 199 each coordinate substrate. Mn(2+)-binding residues include His199 and His201. Position 290 (Tyr290) interacts with substrate.

It belongs to the 4-hydroxy-2-oxovalerate aldolase family.

It carries out the reaction (S)-4-hydroxy-2-oxopentanoate = acetaldehyde + pyruvate. The protein is 4-hydroxy-2-oxovalerate aldolase 1 of Dechloromonas aromatica (strain RCB).